The following is a 50-amino-acid chain: Fungus-induced-related protein 15 (50 aa).

The signal sequence occupies residues 1–21; that stretch reads MNFYSLFVFIALIFSFNVVHG.

May have role in hypoxia response. The polypeptide is Fungus-induced-related protein 15 (fipr-15) (Caenorhabditis elegans).